A 167-amino-acid polypeptide reads, in one-letter code: NAD(P)H-quinone oxidoreductase subunit I, chloroplastic (167 aa).

4Fe-4S ferredoxin-type domains are found at residues 55–84 and 95–124; these read GRIH…VDWK and LNYS…MTEE. [4Fe-4S] cluster is bound by residues Cys-64, Cys-67, Cys-70, Cys-74, Cys-104, Cys-107, Cys-110, and Cys-114.

Belongs to the complex I 23 kDa subunit family. In terms of assembly, NDH is composed of at least 16 different subunits, 5 of which are encoded in the nucleus. [4Fe-4S] cluster is required as a cofactor.

It localises to the plastid. The protein resides in the chloroplast thylakoid membrane. The catalysed reaction is a plastoquinone + NADH + (n+1) H(+)(in) = a plastoquinol + NAD(+) + n H(+)(out). It catalyses the reaction a plastoquinone + NADPH + (n+1) H(+)(in) = a plastoquinol + NADP(+) + n H(+)(out). In terms of biological role, NDH shuttles electrons from NAD(P)H:plastoquinone, via FMN and iron-sulfur (Fe-S) centers, to quinones in the photosynthetic chain and possibly in a chloroplast respiratory chain. The immediate electron acceptor for the enzyme in this species is believed to be plastoquinone. Couples the redox reaction to proton translocation, and thus conserves the redox energy in a proton gradient. This chain is NAD(P)H-quinone oxidoreductase subunit I, chloroplastic, found in Morus indica (Mulberry).